The primary structure comprises 471 residues: Alpha-galactosidase 2 (471 aa).

The N-terminal stretch at 1 to 18 (MFAFYFLTACISLKGVFG) is a signal peptide. Cys-42 and Cys-74 form a disulfide bridge. Positions 72 and 73 each coordinate substrate. Asn-105 carries an N-linked (GlcNAc...) asparagine glycan. Cysteines 121 and 151 form a disulfide. Lys-147 contributes to the substrate binding site. Asp-149 acts as the Nucleophile in catalysis. A glycan (N-linked (GlcNAc...) asparagine) is linked at Asn-175. Residue Arg-205 coordinates substrate. Asp-209 (proton donor) is an active-site residue. Cystine bridges form between Cys-221–Cys-237 and Cys-223–Cys-230. Substrate is bound at residue Gln-251. N-linked (GlcNAc...) asparagine glycans are attached at residues Asn-270, Asn-370, Asn-403, Asn-413, Asn-422, Asn-435, and Asn-454.

The protein belongs to the glycosyl hydrolase 27 family. Homotetramer.

Its subcellular location is the secreted. The enzyme catalyses Hydrolysis of terminal, non-reducing alpha-D-galactose residues in alpha-D-galactosides, including galactose oligosaccharides, galactomannans and galactolipids.. In Saccharomyces cerevisiae (Baker's yeast), this protein is Alpha-galactosidase 2 (MEL2).